A 707-amino-acid polypeptide reads, in one-letter code: Ribosomal RNA large subunit methyltransferase K/L (707 aa).

In terms of domain architecture, THUMP spans 44–155 (VIYNLCLWSR…NDILTVSFDL (112 aa)).

This sequence belongs to the methyltransferase superfamily. RlmKL family.

Its subcellular location is the cytoplasm. The enzyme catalyses guanosine(2445) in 23S rRNA + S-adenosyl-L-methionine = N(2)-methylguanosine(2445) in 23S rRNA + S-adenosyl-L-homocysteine + H(+). It catalyses the reaction guanosine(2069) in 23S rRNA + S-adenosyl-L-methionine = N(2)-methylguanosine(2069) in 23S rRNA + S-adenosyl-L-homocysteine + H(+). In terms of biological role, specifically methylates the guanine in position 2445 (m2G2445) and the guanine in position 2069 (m7G2069) of 23S rRNA. This is Ribosomal RNA large subunit methyltransferase K/L from Legionella pneumophila subsp. pneumophila (strain Philadelphia 1 / ATCC 33152 / DSM 7513).